The chain runs to 354 residues: Cysteine proteinase A (354 aa).

The N-terminal stretch at 1–24 (MARRNPLLFAIVVTILFVVCYGSA) is a signal peptide. Residues 25 to 125 (LIAQTPPPVD…HKEDVHVDDS (101 aa)) constitute a propeptide, activation peptide. Cystine bridges form between C150-C191, C184-C229, and C282-C330. Residue C153 is part of the active site. A glycan (N-linked (GlcNAc...) asparagine) is linked at N208. Active-site residues include H289 and N309.

It belongs to the peptidase C1 family.

The sequence is that of Cysteine proteinase A (LMCPA) from Leishmania mexicana.